A 300-amino-acid polypeptide reads, in one-letter code: uncharacterized protein (300 aa).

The active-site Proton donor is the Y53. 210-220 is an NADP(+) binding site; the sequence is SPLAGGKVFTE.

It belongs to the aldo/keto reductase family. Aldo/keto reductase 2 subfamily.

This is an uncharacterized protein from Bacillus subtilis (strain 168).